Reading from the N-terminus, the 379-residue chain is Chaperone protein DnaJ (379 aa).

The region spanning 7–72 is the J domain; the sequence is CYYETLEVER…DKRAAYDRYG (66 aa). A CR-type zinc finger spans residues 135 to 213; sequence GKTAQIEIPV…CTGSGRVTKE (79 aa). Zn(2+)-binding residues include C148, C151, C165, C168, C187, C190, C201, and C204. CXXCXGXG motif repeat units follow at residues 148 to 155, 165 to 172, 187 to 194, and 201 to 208; these read CEACSGTG, CSTCGGAG, CPSCQGRG, and CPSCTGSG.

Belongs to the DnaJ family. As to quaternary structure, homodimer. Requires Zn(2+) as cofactor.

Its subcellular location is the cytoplasm. In terms of biological role, participates actively in the response to hyperosmotic and heat shock by preventing the aggregation of stress-denatured proteins and by disaggregating proteins, also in an autonomous, DnaK-independent fashion. Unfolded proteins bind initially to DnaJ; upon interaction with the DnaJ-bound protein, DnaK hydrolyzes its bound ATP, resulting in the formation of a stable complex. GrpE releases ADP from DnaK; ATP binding to DnaK triggers the release of the substrate protein, thus completing the reaction cycle. Several rounds of ATP-dependent interactions between DnaJ, DnaK and GrpE are required for fully efficient folding. Also involved, together with DnaK and GrpE, in the DNA replication of plasmids through activation of initiation proteins. The sequence is that of Chaperone protein DnaJ from Rhodopseudomonas palustris (strain ATCC BAA-98 / CGA009).